Reading from the N-terminus, the 429-residue chain is 3-phosphoshikimate 1-carboxyvinyltransferase (429 aa).

3-phosphoshikimate is bound by residues Lys-23, Ser-24, and Arg-28. Position 23 (Lys-23) interacts with phosphoenolpyruvate. 2 residues coordinate phosphoenolpyruvate: Gly-95 and Arg-123. 3-phosphoshikimate-binding residues include Ser-168, Gln-170, Asp-316, and Lys-343. Residue Gln-170 coordinates phosphoenolpyruvate. Asp-316 (proton acceptor) is an active-site residue. Phosphoenolpyruvate is bound by residues Arg-347 and Arg-389.

It belongs to the EPSP synthase family. As to quaternary structure, monomer.

It localises to the cytoplasm. It catalyses the reaction 3-phosphoshikimate + phosphoenolpyruvate = 5-O-(1-carboxyvinyl)-3-phosphoshikimate + phosphate. It participates in metabolic intermediate biosynthesis; chorismate biosynthesis; chorismate from D-erythrose 4-phosphate and phosphoenolpyruvate: step 6/7. Catalyzes the transfer of the enolpyruvyl moiety of phosphoenolpyruvate (PEP) to the 5-hydroxyl of shikimate-3-phosphate (S3P) to produce enolpyruvyl shikimate-3-phosphate and inorganic phosphate. In Bacillus thuringiensis subsp. konkukian (strain 97-27), this protein is 3-phosphoshikimate 1-carboxyvinyltransferase.